The sequence spans 276 residues: Protein MGF 360-15R (276 aa).

Belongs to the asfivirus MGF 360 family.

Plays a role in virus cell tropism, and may be required for efficient virus replication in macrophages. The protein is Protein MGF 360-15R of Ornithodoros (relapsing fever ticks).